A 160-amino-acid chain; its full sequence is Globin-like protein (160 aa).

One can recognise a Globin domain in the interval S2–K152. H101 is a binding site for heme.

The protein belongs to the globin family.

Its subcellular location is the cytoplasm. May be a globin and may play a role in oxygen transport. The sequence is that of Globin-like protein (glb-1) from Caenorhabditis briggsae.